The following is a 289-amino-acid chain: MRKFTAFACGTGAGLLTFYLTKLNEPKAAVHNSWTRSEKPVDPCALWDHNWDLRDPKSLVKPVKNDLSQEQNRYNTELEKVVPKHARHIILIRHGEYLDVGDTDETHHLTERGREQAKYTGKRLCELGIKWDKVIASTMVRAQETADIILNEIDYEKTKVKNCAFLREGAPIPPQPPVGHWKPEASQFFRDGARIEAAFRRYFYRAYPDQTKDSYTLLVGHGNVIRYFVCRALQFPPEAWLRISINHASITWLTISPSGNVSIKYLGDTGFMPVNHLTNRIPRAAKNVV.

The helical transmembrane segment at 7 to 23 threads the bilayer; sequence FACGTGAGLLTFYLTKL.

This sequence belongs to the phosphoglycerate mutase family. BPG-dependent PGAM subfamily. In terms of assembly, interacts with Pk92B/ASK1.

Its subcellular location is the mitochondrion outer membrane. The enzyme catalyses O-phospho-L-seryl-[protein] + H2O = L-seryl-[protein] + phosphate. It carries out the reaction O-phospho-L-threonyl-[protein] + H2O = L-threonyl-[protein] + phosphate. In terms of biological role, displays phosphatase activity for serine/threonine residues, and dephosphorylates and activates Pk92B kinase. Has apparently no phosphoglycerate mutase activity. This chain is Serine/threonine-protein phosphatase Pgam5, mitochondrial, found in Drosophila persimilis (Fruit fly).